A 398-amino-acid polypeptide reads, in one-letter code: 8-amino-7-oxononanoate synthase (398 aa).

R23 contributes to the substrate binding site. 110–111 serves as a coordination point for pyridoxal 5'-phosphate; that stretch reads GY. H135 provides a ligand contact to substrate. Pyridoxal 5'-phosphate contacts are provided by S181, H209, and T237. K240 carries the N6-(pyridoxal phosphate)lysine modification. Residue T354 coordinates substrate.

The protein belongs to the class-II pyridoxal-phosphate-dependent aminotransferase family. BioF subfamily. Homodimer. Pyridoxal 5'-phosphate serves as cofactor.

It carries out the reaction 6-carboxyhexanoyl-[ACP] + L-alanine + H(+) = (8S)-8-amino-7-oxononanoate + holo-[ACP] + CO2. It participates in cofactor biosynthesis; biotin biosynthesis. In terms of biological role, catalyzes the decarboxylative condensation of pimeloyl-[acyl-carrier protein] and L-alanine to produce 8-amino-7-oxononanoate (AON), [acyl-carrier protein], and carbon dioxide. The polypeptide is 8-amino-7-oxononanoate synthase (Anaeromyxobacter dehalogenans (strain 2CP-1 / ATCC BAA-258)).